Reading from the N-terminus, the 309-residue chain is Protein FdhE (309 aa).

The protein belongs to the FdhE family.

It localises to the cytoplasm. Necessary for formate dehydrogenase activity. This chain is Protein FdhE, found in Escherichia coli O9:H4 (strain HS).